Here is a 275-residue protein sequence, read N- to C-terminus: 4-diphosphocytidyl-2-C-methyl-D-erythritol kinase (275 aa).

The active site involves Lys-15. ATP is bound at residue 97 to 107; the sequence is PMGSGLGGGSS. The active site involves Asp-137.

The protein belongs to the GHMP kinase family. IspE subfamily.

The catalysed reaction is 4-CDP-2-C-methyl-D-erythritol + ATP = 4-CDP-2-C-methyl-D-erythritol 2-phosphate + ADP + H(+). It participates in isoprenoid biosynthesis; isopentenyl diphosphate biosynthesis via DXP pathway; isopentenyl diphosphate from 1-deoxy-D-xylulose 5-phosphate: step 3/6. In terms of biological role, catalyzes the phosphorylation of the position 2 hydroxy group of 4-diphosphocytidyl-2C-methyl-D-erythritol. The chain is 4-diphosphocytidyl-2-C-methyl-D-erythritol kinase from Pseudothermotoga lettingae (strain ATCC BAA-301 / DSM 14385 / NBRC 107922 / TMO) (Thermotoga lettingae).